The following is a 422-amino-acid chain: Serine--tRNA ligase (422 aa).

231-233 is an L-serine binding site; the sequence is TGE. Position 262–264 (262–264) interacts with ATP; the sequence is RQE. Glu285 lines the L-serine pocket. Position 349-352 (349-352) interacts with ATP; it reads EISS. An L-serine-binding site is contributed by Ser384.

The protein belongs to the class-II aminoacyl-tRNA synthetase family. Type-1 seryl-tRNA synthetase subfamily. Homodimer. The tRNA molecule binds across the dimer.

It is found in the cytoplasm. The enzyme catalyses tRNA(Ser) + L-serine + ATP = L-seryl-tRNA(Ser) + AMP + diphosphate + H(+). It carries out the reaction tRNA(Sec) + L-serine + ATP = L-seryl-tRNA(Sec) + AMP + diphosphate + H(+). Its pathway is aminoacyl-tRNA biosynthesis; selenocysteinyl-tRNA(Sec) biosynthesis; L-seryl-tRNA(Sec) from L-serine and tRNA(Sec): step 1/1. In terms of biological role, catalyzes the attachment of serine to tRNA(Ser). Is also able to aminoacylate tRNA(Sec) with serine, to form the misacylated tRNA L-seryl-tRNA(Sec), which will be further converted into selenocysteinyl-tRNA(Sec). This chain is Serine--tRNA ligase, found in Mesoplasma florum (strain ATCC 33453 / NBRC 100688 / NCTC 11704 / L1) (Acholeplasma florum).